A 431-amino-acid polypeptide reads, in one-letter code: 3-deoxy-D-manno-octulosonic acid transferase (431 aa).

The chain crosses the membrane as a helical; Signal-anchor span at residues tryptophan 5 to phenylalanine 27. Catalysis depends on glutamate 67, which acts as the Proton acceptor. Residues proline 275 to arginine 276, methionine 315 to valine 317, and asparagine 342 to glutamate 345 each bind CMP.

The protein belongs to the glycosyltransferase group 1 family. Glycosyltransferase 30 subfamily.

The protein localises to the cell inner membrane. It catalyses the reaction lipid IVA (E. coli) + CMP-3-deoxy-beta-D-manno-octulosonate = alpha-Kdo-(2-&gt;6)-lipid IVA (E. coli) + CMP + H(+). It carries out the reaction alpha-Kdo-(2-&gt;6)-lipid IVA (E. coli) + CMP-3-deoxy-beta-D-manno-octulosonate = alpha-Kdo-(2-&gt;4)-alpha-Kdo-(2-&gt;6)-lipid IVA (E. coli) + CMP + H(+). The catalysed reaction is alpha-Kdo-(2-&gt;4)-alpha-Kdo-(2-&gt;6)-lipid IVA (E. coli) + CMP-3-deoxy-beta-D-manno-octulosonate = alpha-Kdo-(2-&gt;8)-alpha-Kdo-(2-&gt;4)-alpha-Kdo-(2-&gt;6)-lipid IVA (E. coli) + CMP + H(+). It participates in bacterial outer membrane biogenesis; LPS core biosynthesis. Its function is as follows. Involved in lipopolysaccharide (LPS) biosynthesis. Catalyzes the transfer of three 3-deoxy-D-manno-octulosonate (Kdo) residues from CMP-Kdo to lipid IV(A), the tetraacyldisaccharide-1,4'-bisphosphate precursor of lipid A. Thus generates the genus-specific LPS epitope of Chlamydia, composed of the trisaccharide alpha-Kdo-(2-&gt;8)-alpha-Kdo-(2-&gt;4)-alpha-Kdo. The protein is 3-deoxy-D-manno-octulosonic acid transferase (waaA) of Chlamydia trachomatis serovar A (strain ATCC VR-571B / DSM 19440 / HAR-13).